The sequence spans 428 residues: Tol-Pal system protein TolB (428 aa).

Residues 1–23 (MRRLYQTVCTLALLLVGLQAAHA) form the signal peptide.

This sequence belongs to the TolB family. In terms of assembly, the Tol-Pal system is composed of five core proteins: the inner membrane proteins TolA, TolQ and TolR, the periplasmic protein TolB and the outer membrane protein Pal. They form a network linking the inner and outer membranes and the peptidoglycan layer.

Its subcellular location is the periplasm. Part of the Tol-Pal system, which plays a role in outer membrane invagination during cell division and is important for maintaining outer membrane integrity. In Alkalilimnicola ehrlichii (strain ATCC BAA-1101 / DSM 17681 / MLHE-1), this protein is Tol-Pal system protein TolB.